Here is a 354-residue protein sequence, read N- to C-terminus: Selection and upkeep of intraepithelial T-cells protein 1 (354 aa).

The region spanning 23–141 (PSSEQFTVNS…EEAIAEVKVT (119 aa)) is the Ig-like V-type 1 domain. 2 disulfide bridges follow: Cys-49–Cys-123 and Cys-163–Cys-217. Residues 161–233 (VECNSEGWFP…TGQEERTSIV (73 aa)) form the Ig-like C1-type 2 domain. 3 consecutive transmembrane segments (helical) span residues 243–263 (SVWI…IMMP), 283–303 (LIGI…TITL), and 326–346 (MTVM…LVYF).

Belongs to the SKINT family. In terms of tissue distribution, expressed in the thymus and skin.

It is found in the membrane. Functionally, may act by engaging a cell surface molecule on immature T-cells in the embryonic thymus. This Macaca fascicularis (Crab-eating macaque) protein is Selection and upkeep of intraepithelial T-cells protein 1 (SKINT1).